A 65-amino-acid polypeptide reads, in one-letter code: Bucain (65 aa).

Cystine bridges form between C3/C24, C17/C42, C46/C57, and C58/C63.

This sequence belongs to the three-finger toxin family. Short-chain subfamily. Orphan group III sub-subfamily. Expressed by the venom gland.

It localises to the secreted. The polypeptide is Bucain (Bungarus candidus (Malayan krait)).